We begin with the raw amino-acid sequence, 448 residues long: Probable tryptophanase (448 aa).

Residue Lys-253 is modified to N6-(pyridoxal phosphate)lysine.

It belongs to the beta-eliminating lyase family. Pyridoxal 5'-phosphate serves as cofactor.

It catalyses the reaction L-tryptophan + H2O = indole + pyruvate + NH4(+). The protein operates within amino-acid degradation; L-tryptophan degradation via pyruvate pathway; indole and pyruvate from L-tryptophan: step 1/1. The polypeptide is Probable tryptophanase (Halobacterium salinarum (strain ATCC 29341 / DSM 671 / R1)).